We begin with the raw amino-acid sequence, 749 residues long: Transcription factor RFX3 (749 aa).

The segment at residues 183-258 (HLQWLLDNYE…YHYYGIRVKP (76 aa)) is a DNA-binding region (RFX-type winged-helix).

The protein belongs to the RFX family.

It is found in the nucleus. Transcription factor required for ciliogenesis and islet cell differentiation during endocrine pancreas development. The chain is Transcription factor RFX3 (rfx3) from Xenopus tropicalis (Western clawed frog).